A 420-amino-acid polypeptide reads, in one-letter code: Gamma-glutamyl phosphate reductase (420 aa).

This sequence belongs to the gamma-glutamyl phosphate reductase family.

The protein localises to the cytoplasm. The enzyme catalyses L-glutamate 5-semialdehyde + phosphate + NADP(+) = L-glutamyl 5-phosphate + NADPH + H(+). The protein operates within amino-acid biosynthesis; L-proline biosynthesis; L-glutamate 5-semialdehyde from L-glutamate: step 2/2. Its function is as follows. Catalyzes the NADPH-dependent reduction of L-glutamate 5-phosphate into L-glutamate 5-semialdehyde and phosphate. The product spontaneously undergoes cyclization to form 1-pyrroline-5-carboxylate. This Acidiphilium cryptum (strain JF-5) protein is Gamma-glutamyl phosphate reductase.